We begin with the raw amino-acid sequence, 281 residues long: Probable endonuclease 4 (281 aa).

Zn(2+) is bound by residues His69, His109, Glu145, Asp179, His182, His216, Asp229, His231, and Glu261.

It belongs to the AP endonuclease 2 family. Zn(2+) is required as a cofactor.

It catalyses the reaction Endonucleolytic cleavage to 5'-phosphooligonucleotide end-products.. Its function is as follows. Endonuclease IV plays a role in DNA repair. It cleaves phosphodiester bonds at apurinic or apyrimidinic (AP) sites, generating a 3'-hydroxyl group and a 5'-terminal sugar phosphate. This is Probable endonuclease 4 from Pectobacterium atrosepticum (strain SCRI 1043 / ATCC BAA-672) (Erwinia carotovora subsp. atroseptica).